A 138-amino-acid polypeptide reads, in one-letter code: MLWILVLFALAASASETTTGTSSNSSQSTSAGTTNTTTPSTACINASNGSDLGAPQLALLAASGWTLSGLLLIFTCCLCCFWLVRKVCSCCGNSSESESKATHAYTNAAFTSSDATLPMGTTGSYTPPQDGSFPPPPR.

The signal sequence occupies residues 1-15; it reads MLWILVLFALAASAS. The disordered stretch occupies residues 17-37; that stretch reads TTTGTSSNSSQSTSAGTTNTT. A helical membrane pass occupies residues 64-84; sequence GWTLSGLLLIFTCCLCCFWLV. Over residues 113–129 the composition is skewed to polar residues; the sequence is SDATLPMGTTGSYTPPQ. The segment at 113 to 138 is disordered; that stretch reads SDATLPMGTTGSYTPPQDGSFPPPPR.

The protein localises to the host membrane. The protein is Membrane glycoprotein UL139 (UL139) of Homo sapiens (Human).